The following is a 452-amino-acid chain: Exodeoxyribonuclease 7 large subunit (452 aa).

This sequence belongs to the XseA family. As to quaternary structure, heterooligomer composed of large and small subunits.

The protein localises to the cytoplasm. It catalyses the reaction Exonucleolytic cleavage in either 5'- to 3'- or 3'- to 5'-direction to yield nucleoside 5'-phosphates.. Bidirectionally degrades single-stranded DNA into large acid-insoluble oligonucleotides, which are then degraded further into small acid-soluble oligonucleotides. The chain is Exodeoxyribonuclease 7 large subunit from Bacillus cereus (strain ATCC 10987 / NRS 248).